We begin with the raw amino-acid sequence, 351 residues long: Peroxisomal membrane protein PEX14 (351 aa).

A disordered region spans residues 54-75 (KARTGTVQASPSQQSVVPPRPP). Low complexity predominate over residues 60-70 (VQASPSQQSVV). An SH3-binding motif is present at residues 83-91 (APPLPERDW). A disordered region spans residues 243–351 (APQLSTPPSE…RGIPAWQLNA (109 aa)). Residues 245–258 (QLSTPPSESTSRQS) are compositionally biased toward polar residues. A compositionally biased stretch (basic and acidic residues) spans 283-293 (VLSREKDKDVN). Positions 294–303 (SDSIAQYEQR) are enriched in polar residues. Over residues 320–334 (SASNGGSSTTSGVAG) the composition is skewed to low complexity.

Belongs to the peroxin-14 family. As to quaternary structure, interacts with PEX13 (via SH3 domain); forming the PEX13-PEX14 docking complex. Interacts with PEX5 (via WxxxF/Y motifs).

It is found in the peroxisome membrane. Component of the PEX13-PEX14 docking complex, a translocon channel that specifically mediates the import of peroxisomal cargo proteins bound to PEX5 receptor. The PEX13-PEX14 docking complex forms a large import pore which can be opened to a diameter of about 9 nm. Mechanistically, PEX5 receptor along with cargo proteins associates with the PEX14 subunit of the PEX13-PEX14 docking complex in the cytosol, leading to the insertion of the receptor into the organelle membrane with the concomitant translocation of the cargo into the peroxisome matrix. The polypeptide is Peroxisomal membrane protein PEX14 (Pichia angusta (Yeast)).